The primary structure comprises 2183 residues: Genome polyprotein (2183 aa).

Residue Gly2 is the site of N-myristoyl glycine; by host attachment. Residues 2–1493 (GAQVSTQKTG…HVSRAFICLQ (1492 aa)) lie on the Cytoplasmic side of the membrane. Residues 566 to 582 (FYQGPTEESVERAMGRV) are amphipathic alpha-helix. Active-site for protease 2A activity residues include His870 and Asp888. The Zn(2+) site is built by Cys905 and Cys907. The active-site For protease 2A activity is Cys959. 2 residues coordinate Zn(2+): Cys965 and His967. Positions 1099–1171 (NNNWLKKFTE…EQSAPSQSDQ (73 aa)) are membrane-binding. An oligomerization region spans residues 1099–1237 (NNNWLKKFTE…SPGAGKSVAT (139 aa)). The tract at residues 1120-1124 (AVKIQ) is RNA-binding. The SF3 helicase domain maps to 1203 to 1359 (EKKMSNYIQF…SMYSQNGKIN (157 aa)). Residues Cys1367, Cys1379, and Cys1384 each coordinate Zn(2+). The segment at 1367–1384 (CDEECCPVNFKKCCPLVC) adopts a C4-type; degenerate zinc-finger fold. The segment at 1411–1418 (EYNHRHSV) is RNA-binding. The tract at residues 1422 to 1427 (LEALFQ) is oligomerization. An intramembrane segment occupies 1494-1509 (ALTTFVSVAGIIYIIY). Topologically, residues 1510–2183 (KLFAGFQGAY…TLRRKWLDAF (674 aa)) are cytoplasmic. Tyr1519 is subject to O-(5'-phospho-RNA)-tyrosine. Residues 1539–1717 (GPAFEFAVAM…FSASLLRHYF (179 aa)) enclose the Peptidase C3 domain. Active-site for protease 3C activity residues include His1578, Glu1609, and Cys1685. The RdRp catalytic domain occupies 1948-2064 (GHLRAFDYSG…SYPLPIDASL (117 aa)). Residues Asp1954 and Asp2050 each contribute to the Mg(2+) site.

The protein belongs to the picornaviruses polyprotein family. As to quaternary structure, interacts with capsid protein VP1 and capsid protein VP3 to form heterotrimeric protomers. Interacts with capsid protein VP0, and capsid protein VP3 to form heterotrimeric protomers. Five protomers subsequently associate to form pentamers which serve as building blocks for the capsid. Interacts with capsid protein VP2, capsid protein VP3 and capsid protein VP4 following cleavage of capsid protein VP0. Interacts with host CXADR. In terms of assembly, interacts with capsid protein VP1 and capsid protein VP3 in the mature capsid. As to quaternary structure, interacts with capsid protein VP0 and capsid protein VP1 to form heterotrimeric protomers. Five protomers subsequently associate to form pentamers which serve as building blocks for the capsid. Interacts with capsid protein VP4 in the mature capsid. Interacts with protein 2C; this interaction may be important for virion morphogenesis. Interacts with capsid protein VP1 and capsid protein VP3. In terms of assembly, homodimer. As to quaternary structure, homohexamer; forms a hexameric ring structure with 6-fold symmetry characteristic of AAA+ ATPases. Interacts (via N-terminus) with host RTN3 (via reticulon domain); this interaction is important for viral replication. Interacts with capsid protein VP3; this interaction may be important for virion morphogenesis. Interacts with protein 3CD. In terms of assembly, homodimer. Interacts with host GBF1. Interacts (via GOLD domain) with host ACBD3 (via GOLD domain); this interaction allows the formation of a viral protein 3A/ACBD3 heterotetramer with a 2:2 stoichiometry, which will stimulate the recruitment of host PI4KB in order to synthesize PI4P at the viral RNA replication sites. As to quaternary structure, interacts with RNA-directed RNA polymerase. Interacts with protein 3AB and with RNA-directed RNA polymerase. In terms of assembly, interacts with Viral protein genome-linked and with protein 3CD. The cofactor is Mg(2+). Specific enzymatic cleavages in vivo by the viral proteases yield processing intermediates and the mature proteins. Post-translationally, myristoylation is required for the formation of pentamers during virus assembly. Further assembly of 12 pentamers and a molecule of genomic RNA generates the provirion. In terms of processing, during virion maturation, immature virions are rendered infectious following cleavage of VP0 into VP4 and VP2. This maturation seems to be an autocatalytic event triggered by the presence of RNA in the capsid and it is followed by a conformational change infectious virion. Myristoylation is required during RNA encapsidation and formation of the mature virus particle. Post-translationally, VPg is uridylylated by the polymerase into VPg-pUpU. This acts as a nucleotide-peptide primer for the genomic RNA replication.

The protein resides in the virion. It localises to the host cytoplasm. It is found in the host cytoplasmic vesicle membrane. Its subcellular location is the host nucleus. The catalysed reaction is a ribonucleoside 5'-triphosphate + H2O = a ribonucleoside 5'-diphosphate + phosphate + H(+). The enzyme catalyses Selective cleavage of Tyr-|-Gly bond in the picornavirus polyprotein.. It carries out the reaction RNA(n) + a ribonucleoside 5'-triphosphate = RNA(n+1) + diphosphate. It catalyses the reaction Selective cleavage of Gln-|-Gly bond in the poliovirus polyprotein. In other picornavirus reactions Glu may be substituted for Gln, and Ser or Thr for Gly.. With respect to regulation, replication or transcription is subject to high level of random mutations by the nucleotide analog ribavirin. Functionally, forms an icosahedral capsid of pseudo T=3 symmetry with capsid proteins VP2 and VP3. The capsid is 300 Angstroms in diameter, composed of 60 copies of each capsid protein and enclosing the viral positive strand RNA genome. Capsid protein VP1 mainly forms the vertices of the capsid. Capsid protein VP1 interacts with host CXADR to provide virion attachment to target host cells. This attachment induces virion internalization. Tyrosine kinases are probably involved in the entry process. After binding to its receptor, the capsid undergoes conformational changes. Capsid protein VP1 N-terminus (that contains an amphipathic alpha-helix) and capsid protein VP4 are externalized. Together, they shape a pore in the host membrane through which viral genome is translocated to host cell cytoplasm. Forms an icosahedral capsid of pseudo T=3 symmetry with capsid proteins VP2 and VP3. The capsid is 300 Angstroms in diameter, composed of 60 copies of each capsid protein and enclosing the viral positive strand RNA genome. In terms of biological role, lies on the inner surface of the capsid shell. After binding to the host receptor, the capsid undergoes conformational changes. Capsid protein VP4 is released, Capsid protein VP1 N-terminus is externalized, and together, they shape a pore in the host membrane through which the viral genome is translocated into the host cell cytoplasm. Its function is as follows. Component of immature procapsids, which is cleaved into capsid proteins VP4 and VP2 after maturation. Allows the capsid to remain inactive before the maturation step. Functionally, cysteine protease that cleaves viral polyprotein and specific host proteins. It is responsible for the autocatalytic cleavage between the P1 and P2 regions, which is the first cleavage occurring in the polyprotein. Also cleaves the host translation initiation factor EIF4G1, in order to shut down the capped cellular mRNA translation. Inhibits the host nucleus-cytoplasm protein and RNA trafficking by cleaving host members of the nuclear pores. Counteracts stress granule formation probably by antagonizing its assembly or promoting its dissassembly. Cleaves and inhibits host IFIH1/MDA5, thereby inhibiting the type-I IFN production and the establishment of the antiviral state. Cleaves and inhibits host MAVS, thereby inhibiting the type-I IFN production and the establishment of the antiviral state. Plays an essential role in the virus replication cycle by acting as a viroporin. Creates a pore in the host endoplasmic reticulum and as a consequence releases Ca2+ in the cytoplasm of infected cell. In turn, high levels of cytoplasmic calcium may trigger membrane trafficking and transport of viral ER-associated proteins to viroplasms, sites of viral genome replication. In terms of biological role, induces and associates with structural rearrangements of intracellular membranes. Displays RNA-binding, nucleotide binding and NTPase activities. May play a role in virion morphogenesis and viral RNA encapsidation by interacting with the capsid protein VP3. Its function is as follows. Localizes the viral replication complex to the surface of membranous vesicles. Together with protein 3CD binds the Cis-Active RNA Element (CRE) which is involved in RNA synthesis initiation. Acts as a cofactor to stimulate the activity of 3D polymerase, maybe through a nucleid acid chaperone activity. Functionally, localizes the viral replication complex to the surface of membranous vesicles. It inhibits host cell endoplasmic reticulum-to-Golgi apparatus transport and causes the disassembly of the Golgi complex, possibly through GBF1 interaction. This would result in depletion of MHC, trail receptors and IFN receptors at the host cell surface. Plays an essential role in viral RNA replication by recruiting ACBD3 and PI4KB at the viral replication sites, thereby allowing the formation of the rearranged membranous structures where viral replication takes place. Acts as a primer for viral RNA replication and remains covalently bound to viral genomic RNA. VPg is uridylylated prior to priming replication into VPg-pUpU. The oriI viral genomic sequence may act as a template for this. The VPg-pUpU is then used as primer on the genomic RNA poly(A) by the RNA-dependent RNA polymerase to replicate the viral genome. During genome replication, the VPg-RNA linkage is removed by the host TDP2, thereby accelerating replication. During the late stage of the replication cycle, host TDP2 is excluded from sites of viral RNA synthesis and encapsidation, allowing for the generation of progeny virions. In terms of biological role, involved in the viral replication complex and viral polypeptide maturation. It exhibits protease activity with a specificity and catalytic efficiency that is different from protease 3C. Protein 3CD lacks polymerase activity. Protein 3CD binds to the 5'UTR of the viral genome. Its function is as follows. Replicates the viral genomic RNA on the surface of intracellular membranes. May form linear arrays of subunits that propagate along a strong head-to-tail interaction called interface-I. Covalently attaches UMP to a tyrosine of VPg, which is used to prime RNA synthesis. The positive stranded RNA genome is first replicated at virus induced membranous vesicles, creating a dsRNA genomic replication form. This dsRNA is then used as template to synthesize positive stranded RNA genomes. ss(+)RNA genomes are either translated, replicated or encapsidated. Functionally, major viral protease that mediates proteolytic processing of the polyprotein. Cleaves host EIF5B, contributing to host translation shutoff. Also cleaves host PABPC1, contributing to host translation shutoff. Cleaves host NLRP1, triggers host N-glycine-mediated degradation of the autoinhibitory NLRP1 N-terminal fragment. This Coxsackievirus B4 (strain E2) protein is Genome polyprotein.